Reading from the N-terminus, the 291-residue chain is MQQIHRLERKLLRATAEAIRDFDLVSQGDRIMVAVSGGKDSYTLLHLLMRLRERAPIDFDLVAVNLDQGQPGFPAQVVEDHLRSVGVPYRMLQRDTYSVVRRLVPEGKTTCPVCSRLRRGVLYNAAVEMGCTKIALGHHRDDLVETLLLSALYSGALKSMPPKLRSRDGRNVVVRPLCYAAEEDVAAFAEAMRFPIVPCDLCGSQPNLRRKRVKRLLAELSAEHPAVKGNLLHALAHVVPSHLLDRDLHRQLADATGRDPWLDAEDEEAEDCGEPPAGDGVVSLGGARGGR.

A PP-loop motif motif is present at residues 36–41 (SGGKDS). [4Fe-4S] cluster-binding residues include cysteine 111, cysteine 114, and cysteine 202. The interval 258-291 (RDPWLDAEDEEAEDCGEPPAGDGVVSLGGARGGR) is disordered. Residues 262-273 (LDAEDEEAEDCG) show a composition bias toward acidic residues.

Belongs to the TtcA family. Homodimer. The cofactor is Mg(2+). It depends on [4Fe-4S] cluster as a cofactor.

Its subcellular location is the cytoplasm. It carries out the reaction cytidine(32) in tRNA + S-sulfanyl-L-cysteinyl-[cysteine desulfurase] + AH2 + ATP = 2-thiocytidine(32) in tRNA + L-cysteinyl-[cysteine desulfurase] + A + AMP + diphosphate + H(+). It participates in tRNA modification. Catalyzes the ATP-dependent 2-thiolation of cytidine in position 32 of tRNA, to form 2-thiocytidine (s(2)C32). The sulfur atoms are provided by the cysteine/cysteine desulfurase (IscS) system. This Anaeromyxobacter dehalogenans (strain 2CP-1 / ATCC BAA-258) protein is tRNA-cytidine(32) 2-sulfurtransferase.